Here is an 860-residue protein sequence, read N- to C-terminus: Transcription factor E2F8 (860 aa).

Residues M1–E114 form a disordered region. A Phosphoserine modification is found at S71. 2 stretches are compositionally biased toward basic and acidic residues: residues I74–S84 and E92–E114. 2 consecutive DNA-binding regions follow at residues R112 to G181 and R261 to G347. 2 disordered regions span residues R407–P433 and T533–D616. Positions S411–S426 are enriched in low complexity. Phosphoserine is present on residues S412 and S416. The span at V542–K554 shows a compositional bias: polar residues. Composition is skewed to basic and acidic residues over residues D555–A565 and R586–T596.

Belongs to the E2F/DP family. In terms of assembly, homodimer and heterodimer: mainly forms homodimers and, to a lesser extent, heterodimers with E2F8. Dimerization is important for DNA-binding. Interacts with HIF1A.

The protein localises to the nucleus. Atypical E2F transcription factor that participates in various processes such as angiogenesis and polyploidization of specialized cells. Mainly acts as a transcription repressor that binds DNA independently of DP proteins and specifically recognizes the E2 recognition site 5'-TTTC[CG]CGC-3'. Directly represses transcription of classical E2F transcription factors such as E2F1: component of a feedback loop in S phase by repressing the expression of E2F1, thereby preventing p53/TP53-dependent apoptosis. Plays a key role in polyploidization of cells in placenta and liver by regulating the endocycle, probably by repressing genes promoting cytokinesis and antagonizing action of classical E2F proteins (E2F1, E2F2 and/or E2F3). Required for placental development by promoting polyploidization of trophoblast giant cells. Acts as a promoter of sprouting angiogenesis, possibly by acting as a transcription activator: associates with HIF1A, recognizes and binds the VEGFA promoter, which is different from canonical E2 recognition site, and activates expression of the VEGFA gene. The sequence is that of Transcription factor E2F8 (E2f8) from Rattus norvegicus (Rat).